A 666-amino-acid polypeptide reads, in one-letter code: Asperfuranone cluster transcription factor afoA (666 aa).

A DNA-binding region (zn(2)-C6 fungal-type) is located at residues 16-43 (CEECRRRKARCDRVRPKCGFCTENELQC). Disordered regions lie at residues 184–206 (LSFD…STTR) and 347–373 (AGSD…GENA). The span at 353–369 (LSPPSSSPPSSLTLSPS) shows a compositional bias: low complexity.

The protein resides in the nucleus. Its function is as follows. Transcription factor that regulates the expression of the gene cluster that mediates the biosynthesis of asperfuranone, a probable antitumor agent. This Emericella nidulans (strain FGSC A4 / ATCC 38163 / CBS 112.46 / NRRL 194 / M139) (Aspergillus nidulans) protein is Asperfuranone cluster transcription factor afoA.